A 495-amino-acid polypeptide reads, in one-letter code: Aspartyl/glutamyl-tRNA(Asn/Gln) amidotransferase subunit B (495 aa).

It belongs to the GatB/GatE family. GatB subfamily. As to quaternary structure, heterotrimer of A, B and C subunits.

It catalyses the reaction L-glutamyl-tRNA(Gln) + L-glutamine + ATP + H2O = L-glutaminyl-tRNA(Gln) + L-glutamate + ADP + phosphate + H(+). The catalysed reaction is L-aspartyl-tRNA(Asn) + L-glutamine + ATP + H2O = L-asparaginyl-tRNA(Asn) + L-glutamate + ADP + phosphate + 2 H(+). Its function is as follows. Allows the formation of correctly charged Asn-tRNA(Asn) or Gln-tRNA(Gln) through the transamidation of misacylated Asp-tRNA(Asn) or Glu-tRNA(Gln) in organisms which lack either or both of asparaginyl-tRNA or glutaminyl-tRNA synthetases. The reaction takes place in the presence of glutamine and ATP through an activated phospho-Asp-tRNA(Asn) or phospho-Glu-tRNA(Gln). This is Aspartyl/glutamyl-tRNA(Asn/Gln) amidotransferase subunit B from Crocosphaera subtropica (strain ATCC 51142 / BH68) (Cyanothece sp. (strain ATCC 51142)).